Here is a 305-residue protein sequence, read N- to C-terminus: Aspartate carbamoyltransferase catalytic subunit (305 aa).

Positions 52 and 53 each coordinate carbamoyl phosphate. An L-aspartate-binding site is contributed by Lys80. Carbamoyl phosphate contacts are provided by Arg102, His132, and Gln135. Arg165 and Arg217 together coordinate L-aspartate. The carbamoyl phosphate site is built by Ala258 and Pro259.

The protein belongs to the aspartate/ornithine carbamoyltransferase superfamily. ATCase family. In terms of assembly, heterododecamer (2C3:3R2) of six catalytic PyrB chains organized as two trimers (C3), and six regulatory PyrI chains organized as three dimers (R2).

It carries out the reaction carbamoyl phosphate + L-aspartate = N-carbamoyl-L-aspartate + phosphate + H(+). It functions in the pathway pyrimidine metabolism; UMP biosynthesis via de novo pathway; (S)-dihydroorotate from bicarbonate: step 2/3. Catalyzes the condensation of carbamoyl phosphate and aspartate to form carbamoyl aspartate and inorganic phosphate, the committed step in the de novo pyrimidine nucleotide biosynthesis pathway. The polypeptide is Aspartate carbamoyltransferase catalytic subunit (Latilactobacillus sakei subsp. sakei (strain 23K) (Lactobacillus sakei subsp. sakei)).